A 304-amino-acid chain; its full sequence is N-acetylmuramic acid 6-phosphate etherase (304 aa).

The region spanning 58–221 is the SIS domain; the sequence is IVDRMKQGGR…TTASMVKMGK (164 aa). The Proton donor role is filled by Glu86. Glu117 is a catalytic residue.

This sequence belongs to the GCKR-like family. MurNAc-6-P etherase subfamily. In terms of assembly, homodimer.

The enzyme catalyses N-acetyl-D-muramate 6-phosphate + H2O = N-acetyl-D-glucosamine 6-phosphate + (R)-lactate. The protein operates within amino-sugar metabolism; N-acetylmuramate degradation. Its function is as follows. Specifically catalyzes the cleavage of the D-lactyl ether substituent of MurNAc 6-phosphate, producing GlcNAc 6-phosphate and D-lactate. This Clostridioides difficile (strain 630) (Peptoclostridium difficile) protein is N-acetylmuramic acid 6-phosphate etherase.